The following is a 681-amino-acid chain: DNA ligase (681 aa).

NAD(+) is bound by residues 45–49, 94–95, and E120; these read DFDFD and SL. K122 serves as the catalytic N6-AMP-lysine intermediate. Residues R143, E177, K289, and K313 each coordinate NAD(+). Positions 403, 406, 421, and 426 each coordinate Zn(2+). Residues 593 to 681 enclose the BRCT domain; it reads SDQQPFAGQS…SLKINFKNTI (89 aa).

It belongs to the NAD-dependent DNA ligase family. LigA subfamily. Mg(2+) is required as a cofactor. It depends on Mn(2+) as a cofactor.

The catalysed reaction is NAD(+) + (deoxyribonucleotide)n-3'-hydroxyl + 5'-phospho-(deoxyribonucleotide)m = (deoxyribonucleotide)n+m + AMP + beta-nicotinamide D-nucleotide.. Functionally, DNA ligase that catalyzes the formation of phosphodiester linkages between 5'-phosphoryl and 3'-hydroxyl groups in double-stranded DNA using NAD as a coenzyme and as the energy source for the reaction. It is essential for DNA replication and repair of damaged DNA. The chain is DNA ligase from Leptospira borgpetersenii serovar Hardjo-bovis (strain L550).